A 635-amino-acid polypeptide reads, in one-letter code: GTPase-GDP dissociation stimulator vimar (635 aa).

ARM repeat units lie at residues 72–118 (KSEV…NICY), 346–391 (TDSH…NLVI), 392–432 (PKPN…MTVD), and 510–550 (RSSL…ILSV).

Interacts with Miro.

It is found in the endoplasmic reticulum. The protein resides in the mitochondrion. It localises to the cytoplasm. The protein localises to the cytosol. In terms of biological role, probably acts as a GEF (guanine nucleotide exchange factor) for the Rho family of small GTP-binding proteins (G proteins) that stimulates the dissociation of GDP to enable subsequent binding of GTP. May also chaperone the processing and/or trafficking of small GTPases independently of GEF activity. By interacting with Miro, promotes mitochondrial fission in response to high calcium concentrations. The chain is GTPase-GDP dissociation stimulator vimar from Drosophila melanogaster (Fruit fly).